Consider the following 359-residue polypeptide: CMP-N-acetylneuraminate-poly-alpha-2,8-sialyltransferase (359 aa).

At 1–7 (MRSIRKR) the chain is on the cytoplasmic side. A helical; Signal-anchor for type II membrane protein transmembrane segment spans residues 8-20 (WTICTISLLLIFY). At 21–359 (KTKEMARTEE…KLTTGKCIKQ (339 aa)) the chain is on the lumenal side. N-linked (GlcNAc...) asparagine glycosylation is found at asparagine 50, asparagine 74, and asparagine 119. 2 disulfides stabilise this stretch: cysteine 142–cysteine 292 and cysteine 156–cysteine 356. Residues asparagine 147 and asparagine 170 each coordinate CMP-N-acetyl-beta-neuraminate. N-linked (GlcNAc...) asparagine glycans are attached at residues asparagine 204 and asparagine 219. CMP-N-acetyl-beta-neuraminate-binding residues include serine 279, threonine 280, glycine 281, and tryptophan 301. The active-site Proton donor/acceptor is the histidine 331.

Belongs to the glycosyltransferase 29 family. In terms of processing, autopolysialylated.

The protein localises to the golgi apparatus membrane. It localises to the secreted. It catalyses the reaction [N-acetyl-alpha-D-neuraminosyl-(2-&gt;8)](n) + CMP-N-acetyl-beta-neuraminate = [N-acetyl-alpha-D-neuraminosyl-(2-&gt;8)](n+1) + CMP + H(+). Catalyzes the transfer of a sialic acid from a CMP-linked sialic acid donor onto a terminal alpha-2,3-, alpha-2,6-, or alpha-2,8-linked sialic acid of an N-linked glycan protein acceptor through alpha-2,8-linkages. Therefore, participates in polysialic acid synthesis on various sialylated N-acetyllactosaminyl oligosaccharides, including NCAM1 N-glycans, FETUB N-glycans and AHSG. It is noteworthy that alpha-2,3-linked sialic acid is apparently a better acceptor than alpha-2,6-linked sialic acid. This Bos taurus (Bovine) protein is CMP-N-acetylneuraminate-poly-alpha-2,8-sialyltransferase (ST8SIA4).